The sequence spans 62 residues: Large ribosomal subunit protein bL28 (62 aa).

This sequence belongs to the bacterial ribosomal protein bL28 family.

This chain is Large ribosomal subunit protein bL28, found in Aster yellows witches'-broom phytoplasma (strain AYWB).